Reading from the N-terminus, the 86-residue chain is RNA-binding protein Hfq (86 aa).

Residues 10-71 (DLFLNNARKE…VSTIQPGKYI (62 aa)) enclose the Sm domain.

The protein belongs to the Hfq family. Homohexamer.

Its function is as follows. RNA chaperone that binds small regulatory RNA (sRNAs) and mRNAs to facilitate mRNA translational regulation in response to envelope stress, environmental stress and changes in metabolite concentrations. Also binds with high specificity to tRNAs. The sequence is that of RNA-binding protein Hfq from Clostridioides difficile (strain 630) (Peptoclostridium difficile).